A 413-amino-acid polypeptide reads, in one-letter code: uncharacterized protein (413 aa).

Residues 14 to 34 (LLFFTVVIIPIFYYIYKIVYL) traverse the membrane as a helical segment. N-linked (GlcNAc...) asparagine; by host glycans are attached at residues N46, N55, N103, N171, N179, N184, N220, N252, N260, N273, N362, N366, N374, N378, N393, and N408. Residues 250 to 263 (TKNSTETNSDNNSE) are compositionally biased toward low complexity. The segment at 250–277 (TKNSTETNSDNNSEIVSETNSETNYSTP) is disordered. Polar residues predominate over residues 264–277 (IVSETNSETNYSTP).

It localises to the membrane. This is an uncharacterized protein from Acanthamoeba polyphaga (Amoeba).